The chain runs to 302 residues: Ornithine carbamoyltransferase (302 aa).

Carbamoyl phosphate contacts are provided by residues 52–55 (STRT), Gln79, Arg103, and 130–133 (HPCQ). Residues Asn161, Asp221, and 225–226 (SM) each bind L-ornithine. Carbamoyl phosphate contacts are provided by residues 261–262 (CL) and Arg289.

Belongs to the aspartate/ornithine carbamoyltransferase superfamily. OTCase family.

The protein resides in the cytoplasm. It carries out the reaction carbamoyl phosphate + L-ornithine = L-citrulline + phosphate + H(+). It participates in amino-acid biosynthesis; L-arginine biosynthesis; L-arginine from L-ornithine and carbamoyl phosphate: step 1/3. In terms of biological role, reversibly catalyzes the transfer of the carbamoyl group from carbamoyl phosphate (CP) to the N(epsilon) atom of ornithine (ORN) to produce L-citrulline. The protein is Ornithine carbamoyltransferase of Syntrophotalea carbinolica (strain DSM 2380 / NBRC 103641 / GraBd1) (Pelobacter carbinolicus).